The chain runs to 156 residues: ATP synthase subunit b (156 aa).

The helical transmembrane segment at Ala13–Ile33 threads the bilayer.

The protein belongs to the ATPase B chain family. F-type ATPases have 2 components, F(1) - the catalytic core - and F(0) - the membrane proton channel. F(1) has five subunits: alpha(3), beta(3), gamma(1), delta(1), epsilon(1). F(0) has three main subunits: a(1), b(2) and c(10-14). The alpha and beta chains form an alternating ring which encloses part of the gamma chain. F(1) is attached to F(0) by a central stalk formed by the gamma and epsilon chains, while a peripheral stalk is formed by the delta and b chains.

It is found in the cell inner membrane. Functionally, f(1)F(0) ATP synthase produces ATP from ADP in the presence of a proton or sodium gradient. F-type ATPases consist of two structural domains, F(1) containing the extramembraneous catalytic core and F(0) containing the membrane proton channel, linked together by a central stalk and a peripheral stalk. During catalysis, ATP synthesis in the catalytic domain of F(1) is coupled via a rotary mechanism of the central stalk subunits to proton translocation. Its function is as follows. Component of the F(0) channel, it forms part of the peripheral stalk, linking F(1) to F(0). The chain is ATP synthase subunit b from Shewanella woodyi (strain ATCC 51908 / MS32).